Here is a 504-residue protein sequence, read N- to C-terminus: ATP synthase subunit alpha 1 (504 aa).

170 to 177 (GDRQIGKT) contacts ATP.

The protein belongs to the ATPase alpha/beta chains family. As to quaternary structure, F-type ATPases have 2 components, CF(1) - the catalytic core - and CF(0) - the membrane proton channel. CF(1) has five subunits: alpha(3), beta(3), gamma(1), delta(1), epsilon(1). CF(0) has three main subunits: a(1), b(2) and c(9-12). The alpha and beta chains form an alternating ring which encloses part of the gamma chain. CF(1) is attached to CF(0) by a central stalk formed by the gamma and epsilon chains, while a peripheral stalk is formed by the delta and b chains.

It localises to the cell inner membrane. It catalyses the reaction ATP + H2O + 4 H(+)(in) = ADP + phosphate + 5 H(+)(out). Its function is as follows. Produces ATP from ADP in the presence of a proton gradient across the membrane. The alpha chain is a regulatory subunit. This chain is ATP synthase subunit alpha 1, found in Syntrophus aciditrophicus (strain SB).